A 202-amino-acid polypeptide reads, in one-letter code: Protein U22 (202 aa).

2 helical membrane-spanning segments follow: residues 5-25 (GWSL…LHII) and 172-192 (FVYY…SCWF).

It is found in the host membrane. The chain is Protein U22 (U22) from Human herpesvirus 6B (strain Z29) (HHV-6 variant B).